A 515-amino-acid polypeptide reads, in one-letter code: 1-pyrroline-5-carboxylate dehydrogenase (515 aa).

Active-site residues include Glu-286 and Cys-320.

The protein belongs to the aldehyde dehydrogenase family. RocA subfamily.

The enzyme catalyses L-glutamate 5-semialdehyde + NAD(+) + H2O = L-glutamate + NADH + 2 H(+). The protein operates within amino-acid degradation; L-proline degradation into L-glutamate; L-glutamate from L-proline: step 2/2. The chain is 1-pyrroline-5-carboxylate dehydrogenase from Bacillus cereus (strain B4264).